The sequence spans 172 residues: RNA pyrophosphohydrolase (172 aa).

The 144-residue stretch at 6–149 folds into the Nudix hydrolase domain; it reads GYRPNVGIIL…KRDVYRMALK (144 aa). Residues 38 to 59 carry the Nudix box motif; that stretch reads GGIKYGESPEQAMYRELMEEVG.

It belongs to the Nudix hydrolase family. RppH subfamily. The cofactor is a divalent metal cation.

Functionally, accelerates the degradation of transcripts by removing pyrophosphate from the 5'-end of triphosphorylated RNA, leading to a more labile monophosphorylated state that can stimulate subsequent ribonuclease cleavage. The sequence is that of RNA pyrophosphohydrolase from Methylobacillus flagellatus (strain ATCC 51484 / DSM 6875 / VKM B-1610 / KT).